We begin with the raw amino-acid sequence, 975 residues long: Glycine dehydrogenase (decarboxylating) (975 aa).

Lys723 is modified (N6-(pyridoxal phosphate)lysine).

The protein belongs to the GcvP family. As to quaternary structure, the glycine cleavage system is composed of four proteins: P, T, L and H. The cofactor is pyridoxal 5'-phosphate.

It catalyses the reaction N(6)-[(R)-lipoyl]-L-lysyl-[glycine-cleavage complex H protein] + glycine + H(+) = N(6)-[(R)-S(8)-aminomethyldihydrolipoyl]-L-lysyl-[glycine-cleavage complex H protein] + CO2. In terms of biological role, the glycine cleavage system catalyzes the degradation of glycine. The P protein binds the alpha-amino group of glycine through its pyridoxal phosphate cofactor; CO(2) is released and the remaining methylamine moiety is then transferred to the lipoamide cofactor of the H protein. The sequence is that of Glycine dehydrogenase (decarboxylating) from Burkholderia mallei (strain NCTC 10247).